The chain runs to 250 residues: NADH-quinone oxidoreductase subunit C (250 aa).

It belongs to the complex I 30 kDa subunit family. As to quaternary structure, NDH-1 is composed of 14 different subunits. Subunits NuoB, C, D, E, F, and G constitute the peripheral sector of the complex.

The protein localises to the cell inner membrane. The enzyme catalyses a quinone + NADH + 5 H(+)(in) = a quinol + NAD(+) + 4 H(+)(out). Functionally, NDH-1 shuttles electrons from NADH, via FMN and iron-sulfur (Fe-S) centers, to quinones in the respiratory chain. The immediate electron acceptor for the enzyme in this species is believed to be ubiquinone. Couples the redox reaction to proton translocation (for every two electrons transferred, four hydrogen ions are translocated across the cytoplasmic membrane), and thus conserves the redox energy in a proton gradient. In Xanthomonas campestris pv. campestris (strain 8004), this protein is NADH-quinone oxidoreductase subunit C.